Reading from the N-terminus, the 569-residue chain is Anti-Muellerian hormone type-2 receptor (569 aa).

Positions 1-17 are cleaved as a signal peptide; it reads MLGTLGLWALLPAAVQA. Residues 18–148 lie on the Extracellular side of the membrane; that stretch reads PPNRRTCVFF…AAPGESPWMA (131 aa). 2 disulfide bridges follow: Cys55/Cys79 and Cys92/Cys109. Residue Asn66 is glycosylated (N-linked (GlcNAc...) asparagine). N-linked (GlcNAc...) asparagine glycosylation occurs at Asn119. Residues 149–169 form a helical membrane-spanning segment; it reads LALLGLVLLLLLLLGGIVVAL. At 170–569 the chain is on the cytoplasmic side; sequence LQRKAYRVQS…PGAACASSDV (400 aa). A Protein kinase domain is found at 201–511; that stretch reads LCFSQVIREG…RLVALVHPQE (311 aa). ATP is bound by residues 207 to 215 and Lys228; that span reads IREGGHAAV. Catalysis depends on Asp331, which acts as the Proton acceptor. Positions 512 to 535 are disordered; the sequence is AQPCPEGRPHSHPEDWPPAPAPAP.

Belongs to the protein kinase superfamily. TKL Ser/Thr protein kinase family. TGFB receptor subfamily. Interacts with type I receptor ACVR1. Mg(2+) is required as a cofactor. Mn(2+) serves as cofactor.

Its subcellular location is the membrane. The enzyme catalyses L-threonyl-[receptor-protein] + ATP = O-phospho-L-threonyl-[receptor-protein] + ADP + H(+). It carries out the reaction L-seryl-[receptor-protein] + ATP = O-phospho-L-seryl-[receptor-protein] + ADP + H(+). Its function is as follows. On ligand binding, forms a receptor complex consisting of two type II and two type I transmembrane serine/threonine kinases. Type II receptors phosphorylate and activate type I receptors which autophosphorylate, then bind and activate SMAD transcriptional regulators. Receptor for anti-Muellerian hormone. The protein is Anti-Muellerian hormone type-2 receptor (AMHR2) of Oryctolagus cuniculus (Rabbit).